The primary structure comprises 223 residues: Thiamine-phosphate synthase (223 aa).

4-amino-2-methyl-5-(diphosphooxymethyl)pyrimidine-binding positions include 37 to 41 (QFREK) and D72. Residues D73 and D92 each coordinate Mg(2+). S110 is a binding site for 4-amino-2-methyl-5-(diphosphooxymethyl)pyrimidine. Residue 136–138 (TQS) participates in 2-[(2R,5Z)-2-carboxy-4-methylthiazol-5(2H)-ylidene]ethyl phosphate binding. 4-amino-2-methyl-5-(diphosphooxymethyl)pyrimidine is bound at residue K139. 2-[(2R,5Z)-2-carboxy-4-methylthiazol-5(2H)-ylidene]ethyl phosphate-binding positions include G168 and 188–189 (IS).

The protein belongs to the thiamine-phosphate synthase family. It depends on Mg(2+) as a cofactor.

It carries out the reaction 2-[(2R,5Z)-2-carboxy-4-methylthiazol-5(2H)-ylidene]ethyl phosphate + 4-amino-2-methyl-5-(diphosphooxymethyl)pyrimidine + 2 H(+) = thiamine phosphate + CO2 + diphosphate. The enzyme catalyses 2-(2-carboxy-4-methylthiazol-5-yl)ethyl phosphate + 4-amino-2-methyl-5-(diphosphooxymethyl)pyrimidine + 2 H(+) = thiamine phosphate + CO2 + diphosphate. It catalyses the reaction 4-methyl-5-(2-phosphooxyethyl)-thiazole + 4-amino-2-methyl-5-(diphosphooxymethyl)pyrimidine + H(+) = thiamine phosphate + diphosphate. It participates in cofactor biosynthesis; thiamine diphosphate biosynthesis; thiamine phosphate from 4-amino-2-methyl-5-diphosphomethylpyrimidine and 4-methyl-5-(2-phosphoethyl)-thiazole: step 1/1. Functionally, condenses 4-methyl-5-(beta-hydroxyethyl)thiazole monophosphate (THZ-P) and 2-methyl-4-amino-5-hydroxymethyl pyrimidine pyrophosphate (HMP-PP) to form thiamine monophosphate (TMP). The sequence is that of Thiamine-phosphate synthase from Streptococcus agalactiae serotype Ia (strain ATCC 27591 / A909 / CDC SS700).